Here is a 94-residue protein sequence, read N- to C-terminus: Co-chaperonin GroES (94 aa).

Belongs to the GroES chaperonin family. Heptamer of 7 subunits arranged in a ring. Interacts with the chaperonin GroEL.

It is found in the cytoplasm. Together with the chaperonin GroEL, plays an essential role in assisting protein folding. The GroEL-GroES system forms a nano-cage that allows encapsulation of the non-native substrate proteins and provides a physical environment optimized to promote and accelerate protein folding. GroES binds to the apical surface of the GroEL ring, thereby capping the opening of the GroEL channel. This is Co-chaperonin GroES from Clostridium perfringens (strain SM101 / Type A).